We begin with the raw amino-acid sequence, 236 residues long: Eukaryotic translation initiation factor 3 subunit J (236 aa).

The tract at residues 20-88 is disordered; that stretch reads ANNINKWEGE…AEEEKRLANL (69 aa). Residues 28–46 are compositionally biased toward acidic residues; sequence GEDDDEDVKESWEDEEEKK. Composition is skewed to basic and acidic residues over residues 47–58 and 68–88; these read DEEKPTKTEVPV and AKLEEEERLREAEEEKRLANL.

This sequence belongs to the eIF-3 subunit J family. In terms of assembly, component of the eukaryotic translation initiation factor 3 (eIF-3) complex. The eIF-3 complex interacts with pix.

The protein localises to the cytoplasm. Component of the eukaryotic translation initiation factor 3 (eIF-3) complex, which is involved in protein synthesis of a specialized repertoire of mRNAs and, together with other initiation factors, stimulates binding of mRNA and methionyl-tRNAi to the 40S ribosome. The eIF-3 complex specifically targets and initiates translation of a subset of mRNAs involved in cell proliferation. The polypeptide is Eukaryotic translation initiation factor 3 subunit J (Drosophila willistoni (Fruit fly)).